The chain runs to 874 residues: Translation initiation factor IF-2 (874 aa).

A disordered region spans residues 1-289 (MKIKNAQLTK…KHYDEHSVQR (289 aa)). Basic and acidic residues predominate over residues 31–48 (SSSEKPTTKVPEKVAKEK). Over residues 81 to 104 (RSSFASEDSTIPSPVSVDTESTAF) the composition is skewed to polar residues. Residues 105–118 (SPPVVEEVVSPLES) show a composition bias toward low complexity. Basic and acidic residues-rich tracts occupy residues 144–158 (PPKK…KEPP) and 186–198 (PKKE…KERT). Positions 199–211 (GTVQTKPQQSSEV) are enriched in polar residues. A compositionally biased stretch (basic and acidic residues) spans 228–260 (YRRDTSKRPGSDFRDRSKKDDSPKAFTGRDRYG). Residues 271–280 (RKKRVQKTKK) show a composition bias toward basic residues. Positions 380 to 549 (IRPPIVAFMG…ALQAEVLELK (170 aa)) constitute a tr-type G domain. The tract at residues 389–396 (GHVDHGKT) is G1. 389-396 (GHVDHGKT) is a binding site for GTP. The tract at residues 414–418 (AITQH) is G2. Residues 435–438 (DTPG) are G3. Residues 435–439 (DTPGH) and 489–492 (NKCD) each bind GTP. The tract at residues 489 to 492 (NKCD) is G4. Residues 525 to 527 (SAK) are G5.

It belongs to the TRAFAC class translation factor GTPase superfamily. Classic translation factor GTPase family. IF-2 subfamily.

The protein localises to the cytoplasm. Functionally, one of the essential components for the initiation of protein synthesis. Protects formylmethionyl-tRNA from spontaneous hydrolysis and promotes its binding to the 30S ribosomal subunits. Also involved in the hydrolysis of GTP during the formation of the 70S ribosomal complex. This chain is Translation initiation factor IF-2, found in Chlamydia abortus (strain DSM 27085 / S26/3) (Chlamydophila abortus).